Here is a 239-residue protein sequence, read N- to C-terminus: Pyridoxine 5'-phosphate synthase (239 aa).

Asn-7 is a 3-amino-2-oxopropyl phosphate binding site. Residue 9–10 (DH) participates in 1-deoxy-D-xylulose 5-phosphate binding. Arg-18 provides a ligand contact to 3-amino-2-oxopropyl phosphate. The active-site Proton acceptor is His-43. Residues Arg-45 and His-50 each coordinate 1-deoxy-D-xylulose 5-phosphate. The active-site Proton acceptor is the Glu-70. Thr-100 contributes to the 1-deoxy-D-xylulose 5-phosphate binding site. His-191 (proton donor) is an active-site residue. Residues Gly-192 and 213–214 (GH) each bind 3-amino-2-oxopropyl phosphate.

It belongs to the PNP synthase family. In terms of assembly, homooctamer; tetramer of dimers.

It is found in the cytoplasm. The enzyme catalyses 3-amino-2-oxopropyl phosphate + 1-deoxy-D-xylulose 5-phosphate = pyridoxine 5'-phosphate + phosphate + 2 H2O + H(+). Its pathway is cofactor biosynthesis; pyridoxine 5'-phosphate biosynthesis; pyridoxine 5'-phosphate from D-erythrose 4-phosphate: step 5/5. Functionally, catalyzes the complicated ring closure reaction between the two acyclic compounds 1-deoxy-D-xylulose-5-phosphate (DXP) and 3-amino-2-oxopropyl phosphate (1-amino-acetone-3-phosphate or AAP) to form pyridoxine 5'-phosphate (PNP) and inorganic phosphate. This Gloeobacter violaceus (strain ATCC 29082 / PCC 7421) protein is Pyridoxine 5'-phosphate synthase.